Reading from the N-terminus, the 274-residue chain is Copper chaperone for superoxide dismutase (274 aa).

The 64-residue stretch at 11–74 folds into the HMA domain; the sequence is ACMLEFAVQM…LLEDTGRQAV (64 aa). Residues cysteine 22 and cysteine 25 each coordinate Cu cation. Lysine 76 is covalently cross-linked (Glycyl lysine isopeptide (Lys-Gly) (interchain with G-Cter in ubiquitin)). A superoxide dismutase-like region spans residues 88–234; sequence AAVAILGGSG…LACGIIARSA (147 aa). Residues cysteine 141 and cysteine 227 are joined by a disulfide bond. Histidine 147, histidine 155, histidine 164, and aspartate 167 together coordinate Zn(2+). Glycyl lysine isopeptide (Lys-Gly) (interchain with G-Cter in ubiquitin) cross-links involve residues lysine 189, lysine 216, and lysine 241. Positions 244 and 246 each coordinate Cu cation.

This sequence in the C-terminal section; belongs to the Cu-Zn superoxide dismutase family. As to quaternary structure, homodimer, and heterodimer with SOD1. Interacts with COMMD1. Interacts with XIAP/BIRC4. Interacts with SLC31A1(via C-terminal domain); this interaction is Cu(1+)-mediated. The heterodimer CCS:SOD1 interacts with SLC31A1; this heterotrimer is Cu(1+)-mediated and its maintenance is regulated through SOD1 activation. Cu(2+) is required as a cofactor. It depends on Zn(2+) as a cofactor. Post-translationally, ubiquitinion by XIAP/BIRC4 leads to enhancement of its chaperone activity toward its physiologic target, SOD1, rather than proteasomal degradation. XIAP/BIRC4 preferentially ubiquitinates at Lys-241.

The protein resides in the cytoplasm. Its function is as follows. Delivers copper to copper zinc superoxide dismutase (SOD1). The protein is Copper chaperone for superoxide dismutase of Sus scrofa (Pig).